The sequence spans 379 residues: Transcription termination factor 1b, mitochondrial (379 aa).

The N-terminal 37 residues, 1–37, are a transit peptide targeting the mitochondrion; it reads MASRNIWCVRRNFLFDLRGWMLQYSAEVFLKSISFRT. Interaction with DNA stretches follow at residues 151 to 152, 229 to 233, 306 to 313, 337 to 340, and 366 to 373; these read RS, QSTKR, SEKKFNDK, SINT, and SQRRYEAK.

It belongs to the mTERF family. As to quaternary structure, monomer. In terms of processing, phosphoprotein with mostly four phosphate groups. While the DNA-binding activity is unaffected by the phosphorylation state, only the phosphorylated form of the protein is active for termination activity. Functioning seems to be regulated by phosphorylation. As to expression, expressed strongly in the heart and at lower levels in brain, liver and kidney.

It is found in the mitochondrion. Functionally, transcription termination factor. Binds to a 28 bp region within the tRNA(Leu(uur)) gene at a position immediately adjacent to and downstream of the 16S rRNA gene; this region comprises a tridecamer sequence critical for directing accurate termination. Binds DNA along the major grove and promotes DNA bending and partial unwinding. Promotes base flipping. Transcription termination activity appears to be polarized with highest specificity for transcripts initiated on the light strand. The protein is Transcription termination factor 1b, mitochondrial of Mus musculus (Mouse).